A 156-amino-acid polypeptide reads, in one-letter code: MPRRRVVGQRKILPDPKFHSELLAKFINVIMQDGKKSTAEKIIYKALDVIAEKKGANHLDILEAALDNVRPSVEVKSRRVGGSTYQVPCEVRPVRRNALAMRWLVEAARKRGEKSMALRLAGEMLDASENKGTAVKKREDVHRMAEANKAFAHYRW.

The protein belongs to the universal ribosomal protein uS7 family. In terms of assembly, part of the 30S ribosomal subunit. Contacts proteins S9 and S11.

Functionally, one of the primary rRNA binding proteins, it binds directly to 16S rRNA where it nucleates assembly of the head domain of the 30S subunit. Is located at the subunit interface close to the decoding center, probably blocks exit of the E-site tRNA. The polypeptide is Small ribosomal subunit protein uS7 (Shewanella sp. (strain MR-7)).